The following is a 640-amino-acid chain: MAAELLFNCEVCVQVRSQACEERRLNVRVNVELLSISNPVHKKDLAVRLTDDADPFFLYNLVISEEDFQSLKSQQGLLVDFSAFPQKFIDLLQQCIQEQNKDIPRFLLQLVYSGSVLDHTPVSLNVVETNPFKHLTHLSLKFLPGNDAEIKKFLARCLKCLKEDKMTLEDKLRKTEEDFTRQLSYTQQSLSEKSRELDKLKNEWTSYTAALTSKHTQELTAEKERALQAQTQYQQQHEQQKKELESLHQRSIQQLQNRLSELEVINKDLTERRYKGDSTVRELKAKLSGVEDECQRAKQEVVSLRRENTTLDAECHEKEKFINQLQTRVAVLEQEIKDKDQLVIRTKEVLDATQEQKVILEENTEKKQSHIEKLETTIKSLSAELLKANEIIKKLQEDLKTLMSKLKLKNTVTIQQEKLLAEKEERLQKEQRELQETGQSLRMKEQEVCKLQEQLETTIQKLEESKQLLKTNENVITWLNKQLNEVQMLKRMETPSSMHGGIRTALSPHGMLERPSFPSSGISHTISPFYAFQKFAEPAHNKNPSPHCPVPKIQFNSQVSKIDQHSDVQVVTAATGHPANKENGDNLGLESKYFKKKEDSIPLRGLSQNTLNSENLKPYLPKVQPSLPAAVTTTSAYFPG.

In terms of domain architecture, PISA spans 40–92 (VHKKDLAVRLTDDADPFFLYNLVISEEDFQSLKSQQGLLVDFSAFPQKFIDLL). The stretch at 154-475 (LARCLKCLKE…KQLLKTNENV (322 aa)) forms a coiled coil.

In terms of assembly, nine homodimers form a cartwheel structure with an internal diameter of 23 nM and radial spokes connecting to the microtubule triplets.

It localises to the cytoplasm. Its subcellular location is the cytoskeleton. It is found in the microtubule organizing center. The protein resides in the centrosome. Its function is as follows. Central scaffolding component of the centrioles ensuring their 9-fold symmetry. Required for centrosome biogenesis and duplication: required both for mother-centriole-dependent centriole duplication and deuterosome-dependent centriole amplification in multiciliated cells. This is Spindle assembly abnormal protein 6 homolog (SASS6) from Gallus gallus (Chicken).